The sequence spans 532 residues: Pre-rRNA-processing protein pro-1 (532 aa).

WD repeat units lie at residues 136-175 and 287-326; these read AHYQ…SADR and GHSD…CLKV. Positions 435–464 are disordered; sequence TLGDDEDDAPEVGNQRRQNKKNNKKNRKLQ. Residues 445–526 are a coiled coil; it reads EVGNQRRQNK…INRQMYEFVA (82 aa). Residues 451-464 are compositionally biased toward basic residues; that stretch reads RQNKKNNKKNRKLQ.

The protein belongs to the WD repeat IPI3/WDR18 family. Component of the PELP1 complex, composed of at least PELP1, TEX10 and WDR18. The complex interacts with pre-60S ribosome particles.

The protein resides in the nucleus. It localises to the nucleolus. Its subcellular location is the nucleoplasm. Component of the PELP1 complex involved in the nucleolar steps of 28S rRNA maturation and the subsequent nucleoplasmic transit of the pre-60S ribosomal subunit. Required for processing ITS2 sequences from rRNA intermediates during 26S rRNA maturation. Required in the soma to promote normal proliferation and prevent germline tumor formation. This is Pre-rRNA-processing protein pro-1 (pro-1) from Caenorhabditis briggsae.